A 747-amino-acid chain; its full sequence is MDDHETPLLSKDLSSSSSSSSSSSSVVVSSLKWILKVVMSVIFVTWVVFLMMYPGSLGDQILTNWRAISSNTLFGLTGSMFLIFSGPILVIAILASLYLIISGEETVFTKKKITKFPRFRLWTFPVLVDGPFGVVSAAEFLGIMVFSVFFLWAIYAYTLRNLNVLDYFHVLPNNRSIFLLELTGLRFGMIGLLCMVFLFLPISRGSILLRLIDIPFEHATRYHVWLGHITMTFFSLHGLCYVVGWTIQGQLLELLFEWKATGIAVLPGVISLVAGLLMWVTSLHTVRKNYFELFFYTHQLYIVFVVFLALHVGDYLFSIVAGGIFLFILDRFLRFYQSRRTVDVISAKSLPCGTLELVLSKPPNMRYNALSFIFLQVKELSWLQWHPFSVSSSPLDGNHHVAVLIKVLGGWTAKLRDQLSTLYEAENQDQLISPESYPKITTCVEGPYGHESPYHLAYENLVLVAGGIGITPFFAILSDILHRKRDGKDCLPGKVLVVWAIKNSDELSLLSAIDIPSICHFFSKKLNLEIHIYVTRQSEPCLEDGMVHKVVHPSVKTPWTNGCSMSVLVGTGDNIWSGLYLIISTIGFIAMITLVDIFYINKYNITTWWYKGLLFVVCMVASVLIFGGLVVVFWHRWEHKTGEVEANGNDKVDLNGEETHNPSAAELKGLAIEEDVQNYTTIRYGTRPAFREIFESLNGKWGSVDVGVIVCGPATLQTTVAKEIRSHSIWRSANHPLFHFNSHSFDL.

A disordered region spans residues 1–23 (MDDHETPLLSKDLSSSSSSSSSS). The transit peptide at 1 to 28 (MDDHETPLLSKDLSSSSSSSSSSSSVVV) directs the protein to the chloroplast. Positions 14–23 (SSSSSSSSSS) are enriched in low complexity. 6 helical membrane-spanning segments follow: residues 37–56 (VVMS…YPGS), 81–99 (FLIF…SLYL), 132–155 (FGVV…WAIY), 222–245 (YHVW…VVGW), 297–321 (THQL…SIVA), and 344–364 (VISA…KPPN). The 122-residue stretch at 187-308 (FGMIGLLCMV…QLYIVFVVFL (122 aa)) folds into the Ferric oxidoreductase domain. Residues His-223, His-237, His-298, and His-311 each contribute to the heme site. Positions 337-454 (QSRRTVDVIS…EGPYGHESPY (118 aa)) constitute an FAD-binding FR-type domain. 386 to 389 (HPFS) contacts FAD. An NAD(+)-binding site is contributed by 446–449 (GPYG). Transmembrane regions (helical) follow at residues 574–596 (NIWS…TLVD) and 612–634 (GLLF…VVFW).

This sequence belongs to the ferric reductase (FRE) family. Requires FAD as cofactor. As to expression, expressed in shoots, flowers and siliques. Detected in cotyledons, leaves and trichomes, but not in roots.

The protein localises to the plastid. It is found in the chloroplast membrane. The catalysed reaction is 2 a Fe(II)-siderophore + NAD(+) + H(+) = 2 a Fe(III)-siderophore + NADH. In terms of biological role, ferric chelate reductase involved in iron mobilization from the cytosol into the chloroplast. May participate in the transport of electrons to a Fe(3+) ion via FAD and heme intermediates. Might be involved iron homeostasis in trichomes. This chain is Ferric reduction oxidase 7, chloroplastic (FRO7), found in Arabidopsis thaliana (Mouse-ear cress).